The chain runs to 440 residues: GTPase Der (440 aa).

EngA-type G domains are found at residues 5-167 (ATVA…PEQE) and 178-353 (IMLS…KEHS). GTP contacts are provided by residues 11–18 (GRPNVGKS), 58–62 (DTGGI), 120–123 (NKSE), 184–191 (GRPNVGKS), 231–235 (DTAGL), and 296–299 (NKWD). The KH-like domain maps to 354–438 (KRITTADVNR…PIRILERVKQ (85 aa)).

It belongs to the TRAFAC class TrmE-Era-EngA-EngB-Septin-like GTPase superfamily. EngA (Der) GTPase family. In terms of assembly, associates with the 50S ribosomal subunit.

Its function is as follows. GTPase that plays an essential role in the late steps of ribosome biogenesis. The sequence is that of GTPase Der from Natranaerobius thermophilus (strain ATCC BAA-1301 / DSM 18059 / JW/NM-WN-LF).